We begin with the raw amino-acid sequence, 568 residues long: Urease subunit alpha (568 aa).

Positions 130-568 (GGIDTHIHFI…LPMAQRYFLF (439 aa)) constitute a Urease domain. His-135, His-137, and Lys-218 together coordinate Ni(2+). Lys-218 is subject to N6-carboxylysine. His-220 contributes to the substrate binding site. 2 residues coordinate Ni(2+): His-247 and His-273. Residue His-321 is the Proton donor of the active site. Asp-361 contacts Ni(2+).

The protein belongs to the metallo-dependent hydrolases superfamily. Urease alpha subunit family. Heterotrimer of UreA (gamma), UreB (beta) and UreC (alpha) subunits. Three heterotrimers associate to form the active enzyme. Requires Ni cation as cofactor. Post-translationally, carboxylation allows a single lysine to coordinate two nickel ions.

It localises to the cytoplasm. It carries out the reaction urea + 2 H2O + H(+) = hydrogencarbonate + 2 NH4(+). It participates in nitrogen metabolism; urea degradation; CO(2) and NH(3) from urea (urease route): step 1/1. This Burkholderia pseudomallei (strain 1106a) protein is Urease subunit alpha.